Reading from the N-terminus, the 642-residue chain is Kinesin-2b (642 aa).

Residues 12-344 form the Kinesin motor domain; sequence NVMVMVRVRP…LRYADRAKQI (333 aa). 107-114 is a binding site for ATP; sequence GQTGSGKT. The ADP site is built by Gly110, Gly112, Lys113, and Thr114. Mg(2+) is bound at residue Thr114. Residues 415–475 adopt a coiled-coil conformation; sequence VQSLRKNLDK…ERKAKERQLM (61 aa).

This sequence belongs to the TRAFAC class myosin-kinesin ATPase superfamily. Kinesin family. Kinesin II subfamily.

It localises to the cell projection. Its subcellular location is the cilium. It is found in the flagellum. The protein resides in the cytoplasm. The protein localises to the cytoskeleton. It localises to the flagellum axoneme. Its subcellular location is the flagellum basal body. Functionally, involved in anterograde intraflagellar transport (IFT). Involved in flagellar assembly. This Giardia intestinalis (strain ATCC 50803 / WB clone C6) (Giardia lamblia) protein is Kinesin-2b.